Consider the following 173-residue polypeptide: Co-chaperone protein HscB (173 aa).

The region spanning 2–74 is the J domain; that stretch reads DYFTLFGLPA…LKRAEYMLSL (73 aa).

This sequence belongs to the HscB family. As to quaternary structure, interacts with HscA and stimulates its ATPase activity. Interacts with IscU.

Its function is as follows. Co-chaperone involved in the maturation of iron-sulfur cluster-containing proteins. Seems to help targeting proteins to be folded toward HscA. The sequence is that of Co-chaperone protein HscB from Photorhabdus laumondii subsp. laumondii (strain DSM 15139 / CIP 105565 / TT01) (Photorhabdus luminescens subsp. laumondii).